A 584-amino-acid chain; its full sequence is AP-1-like transcription factor yap1 (584 aa).

The interval 23-179 is disordered; it reads LAALSSNQPP…AFRERKEKHL (157 aa). The Bipartite nuclear localization signal signature appears at 35–42; the sequence is QQNDKQRS. Positions 36–48 are enriched in basic and acidic residues; sequence QNDKQRSQAKTDP. Low complexity predominate over residues 52-67; the sequence is PGNMSSGSFSMSPGFN. Positions 68-75 match the Bipartite nuclear localization signal motif; it reads KTHPGSGG. The segment covering 79 to 94 has biased composition (acidic residues); sequence GDDESPFLDFNPELDF. 2 stretches are compositionally biased toward basic and acidic residues: residues 112–144 and 170–179; these read SEEH…DKAA and AFRERKEKHL. The 64-residue stretch at 154–217 folds into the bZIP domain; sequence SEPTSKRKAQ…ERLQVELREY (64 aa). Residues 159 to 180 are basic motif; that stretch reads KRKAQNRAAQRAFRERKEKHLK. The interval 182–189 is leucine-zipper; that stretch reads LETKVDEL. The segment at 211–332 is transcription activation 1; that stretch reads QVELREYRKR…PSPKVPSVYN (122 aa). 2 disordered regions span residues 267–379 and 418–441; these read IFNG…TKLN and RGKS…TPGP. The tract at residues 284 to 296 is n-CRD; the sequence is SSPATSDSQVPGV. The segment covering 300-309 has biased composition (polar residues); it reads ETLNGSNNRG. Low complexity predominate over residues 336–362; the sequence is SASSHDSSNSCSPSSSSDSHQSQMLSS. 2 stretches are compositionally biased toward polar residues: residues 363–379 and 422–437; these read NGTS…TKLN and ESVS…NYEQ. Residues 377-480 are transcription activation 2; the sequence is KLNDSVQNHH…SQDFGTFFDD (104 aa). Disulfide bonds link Cys531/Cys555, Cys531/Cys564, and Cys555/Cys564. The segment at 531–564 is c-CRD; the sequence is CTKIWDRLQSMEKFRNGEIDVDNLCSELRTKARC. The Nuclear export signal motif lies at 549-556; sequence IDVDNLCS.

The protein belongs to the bZIP family. YAP subfamily. Post-translationally, depending on the oxidative stress inducing agent, yap1 can undergo two distinct conformational changes, both involving disulfide bond formation, and both masking the nuclear export signal, thus abolishing nuclear export.

The protein localises to the nucleus. Its subcellular location is the cytoplasm. Transcription activator involved in oxidative stress response and redox homeostasis. Regulates the transcription of genes encoding antioxidant enzymes and components of the cellular thiol-reducing pathways. May be involved in antifungal resistance to voriconazole. The sequence is that of AP-1-like transcription factor yap1 from Aspergillus flavus (strain ATCC 200026 / FGSC A1120 / IAM 13836 / NRRL 3357 / JCM 12722 / SRRC 167).